The primary structure comprises 428 residues: Histone deacetylase 3 (428 aa).

The histone deacetylase stretch occupies residues 3-316; that stretch reads NRTSYFYDPD…WTFETSLLLE (314 aa). 1D-myo-inositol 1,4,5,6-tetrakisphosphate-binding residues include H17, G21, and K25. Residue H135 is part of the active site. Zn(2+) contacts are provided by D170, H172, and D259. Position 265 (R265) interacts with 1D-myo-inositol 1,4,5,6-tetrakisphosphate. Positions 385–428 are disordered; that stretch reads LNYERNDEPDPDERGAEENYTRPEAANEFYDGDHDNDKESDVEI. Basic and acidic residues-rich tracts occupy residues 386–405 and 415–428; these read NYER…ENYT and DGDH…DVEI.

This sequence belongs to the histone deacetylase family. HD type 1 subfamily.

It localises to the nucleus. The protein resides in the chromosome. Its subcellular location is the cytoplasm. The protein localises to the cytosol. The enzyme catalyses N(6)-acetyl-L-lysyl-[histone] + H2O = L-lysyl-[histone] + acetate. Its activity is regulated as follows. Inositol tetraphosphate (1D-myo-inositol 1,4,5,6-tetrakisphosphate) promotes the histone deacetylase activity by acting as an intermolecular glue between hdac3 and N-Cor repressor complex components. In terms of biological role, responsible for the deacetylation of lysine residues on the N-terminal part of the core histones (H2A, H2B, H3 and H4). Histone deacetylation gives a tag for epigenetic repression and plays an important role in transcriptional regulation, cell cycle progression and developmental events. Histone deacetylases act via the formation of large multiprotein complexes, such as N-Cor repressor complex, which activate the histone deacetylase activity. May play a role in the regulation of the circadian clock in a deacetylase activity-independent manner. The protein is Histone deacetylase 3 (hdac3) of Tetraodon nigroviridis (Spotted green pufferfish).